Consider the following 184-residue polypeptide: Ribosome-recycling factor (184 aa).

Belongs to the RRF family.

The protein localises to the cytoplasm. Responsible for the release of ribosomes from messenger RNA at the termination of protein biosynthesis. May increase the efficiency of translation by recycling ribosomes from one round of translation to another. The sequence is that of Ribosome-recycling factor from Desulfotalea psychrophila (strain LSv54 / DSM 12343).